Here is a 622-residue protein sequence, read N- to C-terminus: Apical membrane antigen 1 (622 aa).

The signal sequence occupies residues M1–G24. Residues Q25–K546 are Extracellular-facing. Disulfide bonds link C149-C302, C217-C247, C263-C275, C320-C418, and C337-C409. N162 carries N-linked (GlcNAc...) asparagine glycosylation. N286, N371, N421, N422, and N499 each carry an N-linked (GlcNAc...) asparagine glycan. 3 disulfide bridges follow: C443–C502, C490–C507, and C492–C509. The helical transmembrane segment at I547–Y567 threads the bilayer. Topologically, residues K568–Y622 are cytoplasmic. The segment at D577–K607 is disordered.

This sequence belongs to the apicomplexan parasites AMA1 family.

The protein resides in the membrane. In terms of biological role, involved in parasite invasion of erythrocytes. The chain is Apical membrane antigen 1 (AMA-1) from Plasmodium falciparum (isolate 7G8).